Consider the following 440-residue polypeptide: 23S rRNA (uracil(1939)-C(5))-methyltransferase RlmD (440 aa).

Residues 6 to 64 form the TRAM domain; sequence PIHNAQPEQVFIESLDTEGRGIARVEGKVLFVDGALPGERVWARRTQNHKSFDRAELLQ. C77, C83, C86, and C164 together coordinate [4Fe-4S] cluster. S-adenosyl-L-methionine is bound by residues Q273, F302, N307, E323, D351, and D372. Residue C397 is the Nucleophile of the active site.

This sequence belongs to the class I-like SAM-binding methyltransferase superfamily. RNA M5U methyltransferase family. RlmD subfamily.

The enzyme catalyses uridine(1939) in 23S rRNA + S-adenosyl-L-methionine = 5-methyluridine(1939) in 23S rRNA + S-adenosyl-L-homocysteine + H(+). Catalyzes the formation of 5-methyl-uridine at position 1939 (m5U1939) in 23S rRNA. This Acidithiobacillus ferrooxidans (strain ATCC 23270 / DSM 14882 / CIP 104768 / NCIMB 8455) (Ferrobacillus ferrooxidans (strain ATCC 23270)) protein is 23S rRNA (uracil(1939)-C(5))-methyltransferase RlmD.